The primary structure comprises 517 residues: Pentatricopeptide repeat-containing protein At1g13040, mitochondrial (517 aa).

A mitochondrion-targeting transit peptide spans Met1 to Glu57. 14 PPR repeats span residues Val8–Val42, Phe43–Leu77, Ile78–Pro112, Asp113–Pro147, Asp148–Pro182, Asp183–Leu218, Ser219–Pro253, Asp254–Leu288, Asp289–Arg320, Asp324–Met358, Asn359–Pro393, Asp394–Pro428, Asp429–Pro463, and Asp464–Leu498.

Belongs to the PPR family. P subfamily.

Its subcellular location is the mitochondrion. The protein is Pentatricopeptide repeat-containing protein At1g13040, mitochondrial of Arabidopsis thaliana (Mouse-ear cress).